Consider the following 432-residue polypeptide: 5-hydroxybenzimidazole synthase BzaA (432 aa).

Residues methionine 95, tyrosine 124, histidine 163, 185–187 (SYG), and 226–229 (DGMR) contribute to the substrate site. A Zn(2+)-binding site is contributed by histidine 269. Phenylalanine 292 provides a ligand contact to substrate. A Zn(2+)-binding site is contributed by histidine 333. Cysteine 409, cysteine 412, and cysteine 416 together coordinate [4Fe-4S] cluster.

Belongs to the ThiC family. 5-hydroxybenzimidazole synthase subfamily. [4Fe-4S] cluster serves as cofactor.

It catalyses the reaction 5-amino-1-(5-phospho-beta-D-ribosyl)imidazole + AH2 + S-adenosyl-L-methionine = 5-hydroxybenzimidazole + 5'-deoxyadenosine + formate + L-methionine + A + NH4(+) + phosphate + 2 H(+). Functionally, together with BzaB, probably catalyzes the conversion of aminoimidazole ribotide (AIR) to 5-hydroxybenzimidazole (5-HBI) in a radical S-adenosyl-L-methionine (SAM)-dependent reaction. Is thus involved in the anaerobic biosynthesis of the benzimidazole lower axial ligand of the cobamide produced by M.thermoacetica. Requires BzaB for catalytic activity, as BzaA alone displays no activity. This is 5-hydroxybenzimidazole synthase BzaA from Moorella thermoacetica (strain ATCC 39073 / JCM 9320).